The following is a 407-amino-acid chain: Fructose-1,6-bisphosphatase, chloroplastic (407 aa).

A chloroplast-targeting transit peptide spans 1-50; sequence MAAATASSQLIFSKPYSPSRLCPFQLCVFDAKSVLSSSRRKHVNGSGVRC. 5 residues coordinate Mg(2+): E126, E155, D176, L178, and D179. 179 to 182 contributes to the substrate binding site; it reads DGSS. A disulfide bond links C203 and C223. Substrate is bound by residues N287, Y319, Y337, Y339, and K349. Residue E355 participates in Mg(2+) binding.

Belongs to the FBPase class 1 family. Homotetramer. Mg(2+) is required as a cofactor.

It localises to the plastid. It is found in the chloroplast stroma. It carries out the reaction beta-D-fructose 1,6-bisphosphate + H2O = beta-D-fructose 6-phosphate + phosphate. It functions in the pathway carbohydrate biosynthesis; Calvin cycle. This Pisum sativum (Garden pea) protein is Fructose-1,6-bisphosphatase, chloroplastic (FBP).